We begin with the raw amino-acid sequence, 487 residues long: Iron-sulfur cluster assembly SufBD family protein ycf24 (487 aa).

It belongs to the iron-sulfur cluster assembly SufBD family.

The protein resides in the plastid. Its subcellular location is the chloroplast. This chain is Iron-sulfur cluster assembly SufBD family protein ycf24 (ycf24), found in Pyropia yezoensis (Susabi-nori).